Consider the following 211-residue polypeptide: Probable nicotinate-nucleotide adenylyltransferase (211 aa).

The protein belongs to the NadD family.

The enzyme catalyses nicotinate beta-D-ribonucleotide + ATP + H(+) = deamido-NAD(+) + diphosphate. Its pathway is cofactor biosynthesis; NAD(+) biosynthesis; deamido-NAD(+) from nicotinate D-ribonucleotide: step 1/1. In terms of biological role, catalyzes the reversible adenylation of nicotinate mononucleotide (NaMN) to nicotinic acid adenine dinucleotide (NaAD). In Gemmatimonas aurantiaca (strain DSM 14586 / JCM 11422 / NBRC 100505 / T-27), this protein is Probable nicotinate-nucleotide adenylyltransferase.